Reading from the N-terminus, the 379-residue chain is DNA replication and repair protein RecF (379 aa).

30–37 is a binding site for ATP; that stretch reads GDNAQGKS.

Belongs to the RecF family.

It localises to the cytoplasm. Functionally, the RecF protein is involved in DNA metabolism; it is required for DNA replication and normal SOS inducibility. RecF binds preferentially to single-stranded, linear DNA. It also seems to bind ATP. The protein is DNA replication and repair protein RecF of Thermosynechococcus vestitus (strain NIES-2133 / IAM M-273 / BP-1).